The primary structure comprises 93 residues: Small ribosomal subunit protein uS19 (93 aa).

It belongs to the universal ribosomal protein uS19 family.

Protein S19 forms a complex with S13 that binds strongly to the 16S ribosomal RNA. The chain is Small ribosomal subunit protein uS19 from Geobacter sulfurreducens (strain ATCC 51573 / DSM 12127 / PCA).